The following is a 232-amino-acid chain: Ribonuclease 3 (232 aa).

Residues 2 to 135 (IKALEDDLSQ…FIGALYLDQG (134 aa)) form the RNase III domain. Glu48 is a Mg(2+) binding site. Asp52 is a catalytic residue. Mg(2+) is bound by residues Asp121 and Glu124. The active site involves Glu124. The DRBM domain occupies 161-230 (DHKSELQELL…ANQALQLLRR (70 aa)).

Belongs to the ribonuclease III family. In terms of assembly, homodimer. Mg(2+) is required as a cofactor.

Its subcellular location is the cytoplasm. The catalysed reaction is Endonucleolytic cleavage to 5'-phosphomonoester.. In terms of biological role, digests double-stranded RNA. Involved in the processing of primary rRNA transcript to yield the immediate precursors to the large and small rRNAs (23S and 16S). Processes some mRNAs, and tRNAs when they are encoded in the rRNA operon. Processes pre-crRNA and tracrRNA of type II CRISPR loci if present in the organism. The sequence is that of Ribonuclease 3 from Pediococcus pentosaceus (strain ATCC 25745 / CCUG 21536 / LMG 10740 / 183-1w).